We begin with the raw amino-acid sequence, 497 residues long: Serine hydroxymethyltransferase, mitochondrial (497 aa).

The transit peptide at 1 to 27 (MFIRRLHTSSRRLTCGEALRACQQTGA) directs the protein to the mitochondrion. K272 is modified (N6-(pyridoxal phosphate)lysine).

Belongs to the SHMT family. As to quaternary structure, homotetramer. It depends on pyridoxal 5'-phosphate as a cofactor.

The protein resides in the mitochondrion. The enzyme catalyses (6R)-5,10-methylene-5,6,7,8-tetrahydrofolate + glycine + H2O = (6S)-5,6,7,8-tetrahydrofolate + L-serine. It participates in one-carbon metabolism; tetrahydrofolate interconversion. Functionally, interconversion of serine and glycine. This Eremothecium gossypii (strain ATCC 10895 / CBS 109.51 / FGSC 9923 / NRRL Y-1056) (Yeast) protein is Serine hydroxymethyltransferase, mitochondrial (SHM1).